Here is a 338-residue protein sequence, read N- to C-terminus: Lipoate-protein ligase A (338 aa).

The BPL/LPL catalytic domain occupies 29–216 (PATQRVLFLW…AFFSHYGERV (188 aa)). Residues R71, 76–79 (GAVF), and K134 contribute to the ATP site. K134 contributes to the (R)-lipoate binding site.

It belongs to the LplA family. Monomer.

It localises to the cytoplasm. It catalyses the reaction L-lysyl-[lipoyl-carrier protein] + (R)-lipoate + ATP = N(6)-[(R)-lipoyl]-L-lysyl-[lipoyl-carrier protein] + AMP + diphosphate + H(+). Its pathway is protein modification; protein lipoylation via exogenous pathway; protein N(6)-(lipoyl)lysine from lipoate: step 1/2. It participates in protein modification; protein lipoylation via exogenous pathway; protein N(6)-(lipoyl)lysine from lipoate: step 2/2. Its function is as follows. Catalyzes both the ATP-dependent activation of exogenously supplied lipoate to lipoyl-AMP and the transfer of the activated lipoyl onto the lipoyl domains of lipoate-dependent enzymes. The chain is Lipoate-protein ligase A from Klebsiella pneumoniae (strain 342).